The sequence spans 292 residues: 4-hydroxy-tetrahydrodipicolinate synthase (292 aa).

Thr-45 serves as a coordination point for pyruvate. Tyr-133 serves as the catalytic Proton donor/acceptor. Lys-161 acts as the Schiff-base intermediate with substrate in catalysis. Ile-203 contacts pyruvate.

It belongs to the DapA family. In terms of assembly, homotetramer; dimer of dimers.

Its subcellular location is the cytoplasm. It catalyses the reaction L-aspartate 4-semialdehyde + pyruvate = (2S,4S)-4-hydroxy-2,3,4,5-tetrahydrodipicolinate + H2O + H(+). It functions in the pathway amino-acid biosynthesis; L-lysine biosynthesis via DAP pathway; (S)-tetrahydrodipicolinate from L-aspartate: step 3/4. Catalyzes the condensation of (S)-aspartate-beta-semialdehyde [(S)-ASA] and pyruvate to 4-hydroxy-tetrahydrodipicolinate (HTPA). In Herminiimonas arsenicoxydans, this protein is 4-hydroxy-tetrahydrodipicolinate synthase.